Reading from the N-terminus, the 175-residue chain is NADH-quinone oxidoreductase subunit I (175 aa).

4Fe-4S ferredoxin-type domains lie at 64–93 and 110–139; these read KRDE…IIAD and SLYE…LTEE. The [4Fe-4S] cluster site is built by C73, C76, C79, C83, C119, C122, C125, and C129.

It belongs to the complex I 23 kDa subunit family. As to quaternary structure, NDH-1 is composed of 14 different subunits. Subunits NuoA, H, J, K, L, M, N constitute the membrane sector of the complex. [4Fe-4S] cluster serves as cofactor.

Its subcellular location is the cell inner membrane. It catalyses the reaction a quinone + NADH + 5 H(+)(in) = a quinol + NAD(+) + 4 H(+)(out). Functionally, NDH-1 shuttles electrons from NADH, via FMN and iron-sulfur (Fe-S) centers, to quinones in the respiratory chain. The immediate electron acceptor for the enzyme in this species is believed to be ubiquinone. Couples the redox reaction to proton translocation (for every two electrons transferred, four hydrogen ions are translocated across the cytoplasmic membrane), and thus conserves the redox energy in a proton gradient. This is NADH-quinone oxidoreductase subunit I from Cytophaga hutchinsonii (strain ATCC 33406 / DSM 1761 / CIP 103989 / NBRC 15051 / NCIMB 9469 / D465).